Here is a 392-residue protein sequence, read N- to C-terminus: Formate-dependent phosphoribosylglycinamide formyltransferase (392 aa).

Residues 15 to 16 and E75 each bind N(1)-(5-phospho-beta-D-ribosyl)glycinamide; that span reads EL. ATP is bound by residues R107, K148, 153-158, 188-191, and E196; these read SSGKGQ and EEFL. The 191-residue stretch at 112-302 folds into the ATP-grasp domain; that stretch reads DLAAGELNLR…EFELHLRAVL (191 aa). Mg(2+) contacts are provided by E261 and E273. Residues D280, K350, and 357–358 contribute to the N(1)-(5-phospho-beta-D-ribosyl)glycinamide site; that span reads RR.

This sequence belongs to the PurK/PurT family. Homodimer.

It carries out the reaction N(1)-(5-phospho-beta-D-ribosyl)glycinamide + formate + ATP = N(2)-formyl-N(1)-(5-phospho-beta-D-ribosyl)glycinamide + ADP + phosphate + H(+). The protein operates within purine metabolism; IMP biosynthesis via de novo pathway; N(2)-formyl-N(1)-(5-phospho-D-ribosyl)glycinamide from N(1)-(5-phospho-D-ribosyl)glycinamide (formate route): step 1/1. In terms of biological role, involved in the de novo purine biosynthesis. Catalyzes the transfer of formate to 5-phospho-ribosyl-glycinamide (GAR), producing 5-phospho-ribosyl-N-formylglycinamide (FGAR). Formate is provided by PurU via hydrolysis of 10-formyl-tetrahydrofolate. This Synechococcus sp. (strain CC9605) protein is Formate-dependent phosphoribosylglycinamide formyltransferase.